Consider the following 347-residue polypeptide: S-adenosylmethionine:tRNA ribosyltransferase-isomerase (347 aa).

It belongs to the QueA family. In terms of assembly, monomer.

It is found in the cytoplasm. It carries out the reaction 7-aminomethyl-7-carbaguanosine(34) in tRNA + S-adenosyl-L-methionine = epoxyqueuosine(34) in tRNA + adenine + L-methionine + 2 H(+). The protein operates within tRNA modification; tRNA-queuosine biosynthesis. Functionally, transfers and isomerizes the ribose moiety from AdoMet to the 7-aminomethyl group of 7-deazaguanine (preQ1-tRNA) to give epoxyqueuosine (oQ-tRNA). In Halalkalibacterium halodurans (strain ATCC BAA-125 / DSM 18197 / FERM 7344 / JCM 9153 / C-125) (Bacillus halodurans), this protein is S-adenosylmethionine:tRNA ribosyltransferase-isomerase.